We begin with the raw amino-acid sequence, 712 residues long: Polyribonucleotide nucleotidyltransferase (712 aa).

Positions 488 and 494 each coordinate Mg(2+). Residues 555-614 (PKIETINIPTDKIREVIGSGGKVIREIVATTGAKVDINDDGVVKVSASDGAKIKAAIDWI) form the KH domain. The 69-residue stretch at 624-692 (GKIYDGKVVK…DRGKTKLSMK (69 aa)) folds into the S1 motif domain.

Belongs to the polyribonucleotide nucleotidyltransferase family. Mg(2+) serves as cofactor.

The protein resides in the cytoplasm. The enzyme catalyses RNA(n+1) + phosphate = RNA(n) + a ribonucleoside 5'-diphosphate. Functionally, involved in mRNA degradation. Catalyzes the phosphorolysis of single-stranded polyribonucleotides processively in the 3'- to 5'-direction. The protein is Polyribonucleotide nucleotidyltransferase of Caulobacter vibrioides (strain NA1000 / CB15N) (Caulobacter crescentus).